The primary structure comprises 59 residues: UPF0434 protein Noc_2677 (59 aa).

This sequence belongs to the UPF0434 family.

In Nitrosococcus oceani (strain ATCC 19707 / BCRC 17464 / JCM 30415 / NCIMB 11848 / C-107), this protein is UPF0434 protein Noc_2677.